Here is a 46-residue protein sequence, read N- to C-terminus: Protein PsbN (46 aa).

The chain crosses the membrane as a helical span at residues 5–27 (TLVTLFVSGLLMSFTGYALYTAF).

This sequence belongs to the PsbN family.

Its subcellular location is the plastid membrane. Functionally, may play a role in photosystem I and II biogenesis. This Cuscuta obtusiflora (Peruvian dodder) protein is Protein PsbN.